A 524-amino-acid polypeptide reads, in one-letter code: Nickel-binding periplasmic protein (524 aa).

An N-terminal signal peptide occupies residues 1–22; it reads MLSTLRRTLFALLACASFIVHA.

Belongs to the bacterial solute-binding protein 5 family.

The protein resides in the periplasm. In terms of biological role, involved in a nickel transport system, probably represents the nickel binder. This chain is Nickel-binding periplasmic protein (nikA), found in Escherichia coli (strain K12).